The chain runs to 37 residues: Large ribosomal subunit protein bL36 (37 aa).

This sequence belongs to the bacterial ribosomal protein bL36 family.

The polypeptide is Large ribosomal subunit protein bL36 (Desulfitobacterium hafniense (strain Y51)).